Consider the following 338-residue polypeptide: Solute carrier family 35 member G5 (338 aa).

Residues 1–28 are disordered; the sequence is MAGSHPYFNLPDSTHPSPPSGPPSLRWH. 9 consecutive transmembrane segments (helical) span residues 37–57, 67–87, 105–125, 160–180, 190–210, 221–241, 250–270, 281–301, and 310–330; these read TNGL…VGPL, LPSL…ALLL, CFCA…VQVV, CGLL…LWTL, ALGY…LLVY, TVAF…LFVL, LLSW…FTCV, LVCA…YYML, and IMGA…NLSC. Residues 49 to 174 enclose the EamA 1 domain; the sequence is LPAGFVGPLS…SILGLIIIVG (126 aa). The EamA 2 domain occupies 272 to 325; sequence YAVTKAHPALVCAVLHSEVVVALILQYYMLPETVAPSDIMGAGVVLGNITIIPA.

Belongs to the SLC35G solute transporter family.

Its subcellular location is the membrane. The sequence is that of Solute carrier family 35 member G5 (SLC35G5) from Gorilla gorilla gorilla (Western lowland gorilla).